Here is a 373-residue protein sequence, read N- to C-terminus: UDP-N-acetylenolpyruvoylglucosamine reductase (373 aa).

The 174-residue stretch at 30 to 203 (LACTANSVVT…SRVGFRLHTD (174 aa)) folds into the FAD-binding PCMH-type domain. Residue Arg-180 is part of the active site. Ser-258 (proton donor) is an active-site residue. Glu-356 is an active-site residue.

The protein belongs to the MurB family. Requires FAD as cofactor.

The protein resides in the cytoplasm. The enzyme catalyses UDP-N-acetyl-alpha-D-muramate + NADP(+) = UDP-N-acetyl-3-O-(1-carboxyvinyl)-alpha-D-glucosamine + NADPH + H(+). The protein operates within cell wall biogenesis; peptidoglycan biosynthesis. Cell wall formation. The sequence is that of UDP-N-acetylenolpyruvoylglucosamine reductase from Psychrobacter arcticus (strain DSM 17307 / VKM B-2377 / 273-4).